A 425-amino-acid chain; its full sequence is Enolase (425 aa).

Gln-162 lines the (2R)-2-phosphoglycerate pocket. Glu-204 (proton donor) is an active-site residue. Mg(2+) is bound by residues Asp-241, Glu-282, and Asp-309. Positions 334, 363, 364, and 385 each coordinate (2R)-2-phosphoglycerate. The Proton acceptor role is filled by Lys-334.

It belongs to the enolase family. Requires Mg(2+) as cofactor.

Its subcellular location is the cytoplasm. The protein localises to the secreted. It localises to the cell surface. The enzyme catalyses (2R)-2-phosphoglycerate = phosphoenolpyruvate + H2O. Its pathway is carbohydrate degradation; glycolysis; pyruvate from D-glyceraldehyde 3-phosphate: step 4/5. Catalyzes the reversible conversion of 2-phosphoglycerate (2-PG) into phosphoenolpyruvate (PEP). It is essential for the degradation of carbohydrates via glycolysis. This is Enolase from Corynebacterium diphtheriae (strain ATCC 700971 / NCTC 13129 / Biotype gravis).